Here is a 183-residue protein sequence, read N- to C-terminus: Adenine phosphoribosyltransferase (183 aa).

It belongs to the purine/pyrimidine phosphoribosyltransferase family. As to quaternary structure, homodimer.

The protein resides in the cytoplasm. It carries out the reaction AMP + diphosphate = 5-phospho-alpha-D-ribose 1-diphosphate + adenine. The protein operates within purine metabolism; AMP biosynthesis via salvage pathway; AMP from adenine: step 1/1. In terms of biological role, catalyzes a salvage reaction resulting in the formation of AMP, that is energically less costly than de novo synthesis. The sequence is that of Adenine phosphoribosyltransferase from Shewanella halifaxensis (strain HAW-EB4).